Here is a 508-residue protein sequence, read N- to C-terminus: Photosystem II CP47 reaction center protein (508 aa).

Transmembrane regions (helical) follow at residues 21–36, 101–115, 140–156, 203–218, 237–252, and 457–472; these read SVHI…WAGS, IVFS…IWHW, GIHL…FGAF, IAAG…FHLS, VLSS…AFVV, and SFAL…HGAR.

The protein belongs to the PsbB/PsbC family. PsbB subfamily. PSII is composed of 1 copy each of membrane proteins PsbA, PsbB, PsbC, PsbD, PsbE, PsbF, PsbH, PsbI, PsbJ, PsbK, PsbL, PsbM, PsbT, PsbX, PsbY, PsbZ, Psb30/Ycf12, at least 3 peripheral proteins of the oxygen-evolving complex and a large number of cofactors. It forms dimeric complexes. Binds multiple chlorophylls. PSII binds additional chlorophylls, carotenoids and specific lipids. is required as a cofactor.

It is found in the plastid. The protein localises to the chloroplast thylakoid membrane. One of the components of the core complex of photosystem II (PSII). It binds chlorophyll and helps catalyze the primary light-induced photochemical processes of PSII. PSII is a light-driven water:plastoquinone oxidoreductase, using light energy to abstract electrons from H(2)O, generating O(2) and a proton gradient subsequently used for ATP formation. The polypeptide is Photosystem II CP47 reaction center protein (Aethionema grandiflorum (Persian stone-cress)).